We begin with the raw amino-acid sequence, 911 residues long: Protein translocase subunit SecA (911 aa).

Residues glutamine 86, 104–108, and aspartate 512 contribute to the ATP site; that span reads GEGKT. Residues 869–888 are disordered; the sequence is ALADDGQPQGAQPVRNVLPK. Zn(2+)-binding residues include cysteine 895, cysteine 897, cysteine 906, and histidine 907.

The protein belongs to the SecA family. In terms of assembly, monomer and homodimer. Part of the essential Sec protein translocation apparatus which comprises SecA, SecYEG and auxiliary proteins SecDF-YajC and YidC. Zn(2+) is required as a cofactor.

It localises to the cell inner membrane. The protein localises to the cytoplasm. It catalyses the reaction ATP + H2O + cellular proteinSide 1 = ADP + phosphate + cellular proteinSide 2.. In terms of biological role, part of the Sec protein translocase complex. Interacts with the SecYEG preprotein conducting channel. Has a central role in coupling the hydrolysis of ATP to the transfer of proteins into and across the cell membrane, serving both as a receptor for the preprotein-SecB complex and as an ATP-driven molecular motor driving the stepwise translocation of polypeptide chains across the membrane. This chain is Protein translocase subunit SecA, found in Bordetella parapertussis (strain 12822 / ATCC BAA-587 / NCTC 13253).